Consider the following 203-residue polypeptide: Auxin-responsive protein IAA4 (203 aa).

Positions 1-31 (MEECKGGGMSPSSSMDSSTHPALSTTSSAAT) are disordered. Residues 10–31 (SPSSSMDSSTHPALSTTSSAAT) show a composition bias toward low complexity. An EAR-like (transcriptional repression) motif is present at residues 40–44 (LRLGL). Positions 108-202 (TLFVKVYMEG…KKLRIARMDK (95 aa)) constitute a PB1 domain.

It belongs to the Aux/IAA family. As to quaternary structure, homodimers and heterodimers.

It is found in the nucleus. Aux/IAA proteins are short-lived transcriptional factors that function as repressors of early auxin response genes at low auxin concentrations. The sequence is that of Auxin-responsive protein IAA4 (IAA4) from Oryza sativa subsp. japonica (Rice).